The primary structure comprises 179 residues: Natural killer cells antigen CD94 (179 aa).

The Cytoplasmic segment spans residues 1 to 10 (MAVSRITRWR). A helical; Signal-anchor for type II membrane protein membrane pass occupies residues 11–31 (LMSMFFGIKCLFLIVALGVLV). The Extracellular segment spans residues 32–179 (KNSFTIQNIQ…NRFICKQLPT (148 aa)). 4 disulfides stabilise this stretch: Cys-58–Cys-70, Cys-61–Cys-72, Cys-89–Cys-174, and Cys-152–Cys-166. The 108-residue stretch at 68-175 (HQCSCYFISK…CENKNRFICK (108 aa)) folds into the C-type lectin domain. N-linked (GlcNAc...) asparagine glycosylation is present at Asn-93.

Can form disulfide-bonded heterodimer with NKG2 family members KLRC1 and KLRC2. KLRD1-KLRC1 heterodimer interacts with peptide-bound MHC-E-B2M heterotrimeric complex. KLRD1 plays a prominent role in directly interacting with MHC-E. KLRD1-KLRC1 interacts with much higher affinity with peptide-bound MHC-E-B2M than KLRD1-KLRC2. Interacts with the adapter protein TYROBP/DAP12; this interaction is required for cell surface expression and cell activation.

The protein resides in the cell membrane. Its function is as follows. Immune receptor involved in self-nonself discrimination. In complex with KLRC1 or KLRC2 on cytotoxic and regulatory lymphocyte subsets, recognizes non-classical major histocompatibility (MHC) class Ib molecule MHC-E loaded with self-peptides derived from the signal sequence of classical MHC class Ia and non-classical MHC class Ib molecules. Enables cytotoxic cells to monitor the expression of MHC class I molecules in healthy cells and to tolerate self. Primarily functions as a ligand binding subunit as it lacks the capacity to signal. KLRD1-KLRC1 acts as an immune inhibitory receptor. Key inhibitory receptor on natural killer (NK) cells that regulates their activation and effector functions. Dominantly counteracts T cell receptor signaling on a subset of memory/effector CD8-positive T cells as part of an antigen-driven response to avoid autoimmunity. On intraepithelial CD8-positive gamma-delta regulatory T cells triggers TGFB1 secretion, which in turn limits the cytotoxic programming of intraepithelial CD8-positive alpha-beta T cells, distinguishing harmless from pathogenic antigens. In MHC-E-rich tumor microenvironment, acts as an immune inhibitory checkpoint and may contribute to progressive loss of effector functions of NK cells and tumor-specific T cells, a state known as cell exhaustion. Upon MHC-E-peptide binding, transmits intracellular signals through KLRC1 immunoreceptor tyrosine-based inhibition motifs (ITIMs) by recruiting INPP5D/SHIP-1 and INPPL1/SHIP-2 tyrosine phosphatases to ITIMs, and ultimately opposing signals transmitted by activating receptors through dephosphorylation of proximal signaling molecules. Functionally, KLRD1-KLRC2 acts as an immune activating receptor. On cytotoxic lymphocyte subsets recognizes MHC-E loaded with signal sequence-derived peptides from non-classical MHC class Ib MHC-G molecules, likely playing a role in the generation and effector functions of adaptive NK cells and in maternal-fetal tolerance during pregnancy. Regulates the effector functions of terminally differentiated cytotoxic lymphocyte subsets, and in particular may play a role in adaptive NK cell response to viral infection. Upon MHC-E-peptide binding, transmits intracellular signals via the adapter protein TYROBP/DAP12, triggering the phosphorylation of proximal signaling molecules and cell activation. The protein is Natural killer cells antigen CD94 (Klrd1) of Rattus norvegicus (Rat).